We begin with the raw amino-acid sequence, 184 residues long: Alpha-tubulin N-acetyltransferase (184 aa).

An N-acetyltransferase domain is found at 1–170 (METFNHIDIK…NHFVIFSNYF (170 aa)). Residues 104-117 (FYILEKFQKRGLGI) and 140-149 (SYKLQNFLKK) contribute to the acetyl-CoA site.

This sequence belongs to the acetyltransferase ATAT1 family.

The catalysed reaction is L-lysyl-[alpha-tubulin] + acetyl-CoA = N(6)-acetyl-L-lysyl-[alpha-tubulin] + CoA + H(+). Specifically acetylates 'Lys-40' in alpha-tubulin on the lumenal side of microtubules. Promotes microtubule destabilization and accelerates microtubule dynamics; this activity may be independent of acetylation activity. Acetylates alpha-tubulin with a slow enzymatic rate, due to a catalytic site that is not optimized for acetyl transfer. Enters the microtubule through each end and diffuses quickly throughout the lumen of microtubules. Acetylates only long/old microtubules because of its slow acetylation rate since it does not have time to act on dynamically unstable microtubules before the enzyme is released. The polypeptide is Alpha-tubulin N-acetyltransferase (Plasmodium falciparum (isolate 3D7)).